Consider the following 332-residue polypeptide: 2,3-diketo-L-gulonate reductase (332 aa).

The active-site Proton donor is His44. Residues 168-174 (ITMVDMS), 224-225 (WK), and 304-306 (GHE) contribute to the NAD(+) site.

This sequence belongs to the LDH2/MDH2 oxidoreductase family. DlgD subfamily. Homodimer.

Its subcellular location is the cytoplasm. It carries out the reaction 3-dehydro-L-gulonate + NAD(+) = 2,3-dioxo-L-gulonate + NADH + H(+). The enzyme catalyses 3-dehydro-L-gulonate + NADP(+) = 2,3-dioxo-L-gulonate + NADPH + H(+). Catalyzes the reduction of 2,3-diketo-L-gulonate in the presence of NADH, to form 3-keto-L-gulonate. This Salmonella newport (strain SL254) protein is 2,3-diketo-L-gulonate reductase.